A 162-amino-acid chain; its full sequence is Transmembrane protein 92 (162 aa).

Positions 1–22 (MLDTWVWGTLTLTFGLLSSLQG) are cleaved as a signal peptide. Residues 23–63 (VSFNETANTCDILNCPKGFTCCVKECCPERKVWDPANDRFR) are Extracellular-facing. Residues 64 to 84 (FLVILACIIFPILFICALVSL) form a helical membrane-spanning segment. Residues 85–162 (FCPNCTELQH…QMRGRAYATL (78 aa)) are Cytoplasmic-facing. Residues 134–162 (TPPTEPPPPYSLRPEGPAGQMRGRAYATL) form a disordered region.

Its subcellular location is the membrane. This is Transmembrane protein 92 (Tmem92) from Mus musculus (Mouse).